The chain runs to 146 residues: Hemoglobin subunit beta (146 aa).

Val1 is modified (N-acetylvaline). The region spanning 2–146 (HLTGEEKAAV…VANALAHKYH (145 aa)) is the Globin domain. At Thr12 the chain carries Phosphothreonine. A Phosphoserine modification is found at Ser44. Position 59 is an N6-acetyllysine (Lys59). His63 contacts heme b. Lys82 carries the post-translational modification N6-acetyllysine. His92 contacts heme b. S-nitrosocysteine is present on Cys93. Lys144 carries the N6-acetyllysine modification.

This sequence belongs to the globin family. In terms of assembly, heterotetramer of two alpha chains and two beta chains. As to expression, red blood cells.

Involved in oxygen transport from the lung to the various peripheral tissues. This chain is Hemoglobin subunit beta (HBB), found in Aotus trivirgatus (Three-striped night monkey).